The sequence spans 386 residues: Patatin-B1 (386 aa).

Residues 1–23 form the signal peptide; the sequence is MATTKSFLILFFMILATTSSTCA. The PNPLA domain maps to 32 to 229; sequence LSIDGGGIKG…TVGDPALLSL (198 aa). The short motif at 36–41 is the GXGXXG element; it reads GGGIKG. A GXSXG motif is present at residues 75 to 79; the sequence is GTSTG. The active-site Nucleophile is the Ser77. N-linked (GlcNAc...) asparagine glycosylation is present at Asn115. Catalysis depends on Asp215, which acts as the Proton acceptor. A DGA/G motif is present at residues 215–217; it reads DGG.

The protein belongs to the patatin family.

It localises to the vacuole. Functionally, probable lipolytic acyl hydrolase (LAH), an activity which is thought to be involved in the response of tubers to pathogens. The polypeptide is Patatin-B1 (PATB1) (Solanum tuberosum (Potato)).